A 577-amino-acid chain; its full sequence is Arginine--tRNA ligase (577 aa).

A 'HIGH' region motif is present at residues 122-132 (PNVAKEMHVGH).

Belongs to the class-I aminoacyl-tRNA synthetase family. As to quaternary structure, monomer.

Its subcellular location is the cytoplasm. The enzyme catalyses tRNA(Arg) + L-arginine + ATP = L-arginyl-tRNA(Arg) + AMP + diphosphate. The chain is Arginine--tRNA ligase from Salmonella enteritidis PT4 (strain P125109).